A 336-amino-acid polypeptide reads, in one-letter code: Glycerol-3-phosphate dehydrogenase [NAD(P)+] (336 aa).

Residues Ser11, Trp12, Arg33, Arg34, and Lys107 each contribute to the NADPH site. Sn-glycerol 3-phosphate contacts are provided by Lys107 and Gly137. NADPH is bound at residue Ala141. Residues Lys192, Asp245, Ser255, Arg256, and Asn257 each coordinate sn-glycerol 3-phosphate. The active-site Proton acceptor is the Lys192. Residue Arg256 participates in NADPH binding. Residue Glu282 coordinates NADPH.

This sequence belongs to the NAD-dependent glycerol-3-phosphate dehydrogenase family.

Its subcellular location is the cytoplasm. The catalysed reaction is sn-glycerol 3-phosphate + NAD(+) = dihydroxyacetone phosphate + NADH + H(+). It catalyses the reaction sn-glycerol 3-phosphate + NADP(+) = dihydroxyacetone phosphate + NADPH + H(+). The protein operates within membrane lipid metabolism; glycerophospholipid metabolism. In terms of biological role, catalyzes the reduction of the glycolytic intermediate dihydroxyacetone phosphate (DHAP) to sn-glycerol 3-phosphate (G3P), the key precursor for phospholipid synthesis. This chain is Glycerol-3-phosphate dehydrogenase [NAD(P)+], found in Thermobifida fusca (strain YX).